A 315-amino-acid chain; its full sequence is D-alanine--D-alanine ligase (315 aa).

An ATP-grasp domain is found at 101 to 297 (KHIFRSLNID…FNELVKIIIE (197 aa)). 128-181 (KIDYPYVLKPINEGSSIGVYIIFSHEDYLELKNNSSTIMEKMIVEEYIPGIELH) is a binding site for ATP. Asp-249, Glu-263, and Asn-265 together coordinate Mg(2+).

Belongs to the D-alanine--D-alanine ligase family. Mg(2+) is required as a cofactor. Requires Mn(2+) as cofactor.

The protein resides in the cytoplasm. It carries out the reaction 2 D-alanine + ATP = D-alanyl-D-alanine + ADP + phosphate + H(+). Its pathway is cell wall biogenesis; peptidoglycan biosynthesis. Cell wall formation. The chain is D-alanine--D-alanine ligase from Wolbachia pipientis wMel.